The chain runs to 688 residues: Eukaryotic translation initiation factor 3 subunit B (688 aa).

Residues 1–28 (MAKKKGDQYDSDGAEDQDYDEEPVFEDP) are disordered. A compositionally biased stretch (acidic residues) spans 9-25 (YDSDGAEDQDYDEEPVF). The RRM domain maps to 57–141 (NVIVVDNIPV…HTLLVNLFSD (85 aa)). WD repeat units lie at residues 208–246 (RERF…KINK), 247–287 (FAHS…EKRS), 291–329 (DGSS…LLDK), 332–367 (IKVQ…TLLE), 440–482 (EVKE…EPTM), and 527–572 (GDHY…KRVN). Residues 612–643 (DRVRMTRASKELLEKRAKLREQFVEYRAKRVN) are a coiled coil.

The protein belongs to the eIF-3 subunit B family. In terms of assembly, component of the eukaryotic translation initiation factor 3 (eIF-3) complex.

It is found in the cytoplasm. Its function is as follows. RNA-binding component of the eukaryotic translation initiation factor 3 (eIF-3) complex, which is involved in protein synthesis of a specialized repertoire of mRNAs and, together with other initiation factors, stimulates binding of mRNA and methionyl-tRNAi to the 40S ribosome. The eIF-3 complex specifically targets and initiates translation of a subset of mRNAs involved in cell proliferation. In Culex quinquefasciatus (Southern house mosquito), this protein is Eukaryotic translation initiation factor 3 subunit B.